We begin with the raw amino-acid sequence, 64 residues long: UPF0370 protein YE1145 (64 aa).

A helical transmembrane segment spans residues 3–23 (WLADYWWVVLIILVGMILNGI). The disordered stretch occupies residues 36 to 64 (SNKPEIPPHRDNNAQWDDDDDWPDKDKKK).

It belongs to the UPF0370 family.

Its subcellular location is the cell membrane. The polypeptide is UPF0370 protein YE1145 (Yersinia enterocolitica serotype O:8 / biotype 1B (strain NCTC 13174 / 8081)).